The following is a 3364-amino-acid chain: Salivary gland surface protein 1 (3364 aa).

2 beta-propeller regions span residues 1–344 (MLRI…VVDA) and 705–1216 (FEQE…LKAL). The N-linked (GlcNAc...) asparagine glycan is linked to asparagine 59. 2 disulfides stabilise this stretch: cysteine 251/cysteine 297 and cysteine 1128/cysteine 1139. The segment at 345-2733 (VEPKLDQGSP…PVSQIDPDGQ (2389 aa)) is rhs/YD-repeats. The N-linked (GlcNAc...) asparagine glycan is linked to asparagine 1149. The interval 1345 to 1494 (NQELVQFLGF…VHVDHVRLSP (150 aa)) is carbohydrate-binding module (CBM). A lectin carbohydrate-recognition domain (lectin-CRD) region spans residues 1575–1715 (HSWVESFSPY…VGIKDVIVME (141 aa)). Residues 2225 to 2304 (HDKCDQNLIP…SEKMLEQGYP (80 aa)) are wedge domain. 2 disulfide bridges follow: cysteine 2253-cysteine 2285 and cysteine 2407-cysteine 2421. The next 5 helical transmembrane spans lie at 2734-2754 (IAVT…LGAA), 2774-2794 (IGLF…AATF), 2805-2825 (MIAG…LGAA), 2844-2864 (WNGL…FVGI), and 2878-2898 (MIYA…GGGM). Positions 3126–3216 (YSPDSDGNQI…ARIAPAALRN (91 aa)) are tox-SGS.

In terms of processing, probably cleaved at the C-terminus. As to expression, female saliva (at protein level). Female salivary gland (at protein level). Not detected in female carcass without salivary glands. Not detected in male tissues.

The protein resides in the cell membrane. It localises to the secreted. In terms of biological role, (Microbial infection) Facilitates, but is not essential for, invasion of salivary glands by Plasmodium gallinaceum. Plays a role in Plasmodium gallinaceum oocyst development in mosquito midgut. Functionally, (Microbial infection) Probably facilitates Zika virus replication in salivary glands. In Aedes aegypti (Yellowfever mosquito), this protein is Salivary gland surface protein 1.